A 307-amino-acid chain; its full sequence is tRNA dimethylallyltransferase (307 aa).

9-16 (GPTAIGKT) lines the ATP pocket. 11–16 (TAIGKT) contributes to the substrate binding site. 2 interaction with substrate tRNA regions span residues 34 to 37 (DSRQ) and 164 to 168 (QRMMR).

This sequence belongs to the IPP transferase family. Monomer. Mg(2+) serves as cofactor.

The catalysed reaction is adenosine(37) in tRNA + dimethylallyl diphosphate = N(6)-dimethylallyladenosine(37) in tRNA + diphosphate. In terms of biological role, catalyzes the transfer of a dimethylallyl group onto the adenine at position 37 in tRNAs that read codons beginning with uridine, leading to the formation of N6-(dimethylallyl)adenosine (i(6)A). This is tRNA dimethylallyltransferase from Flavobacterium psychrophilum (strain ATCC 49511 / DSM 21280 / CIP 103535 / JIP02/86).